We begin with the raw amino-acid sequence, 682 residues long: Solute carrier organic anion transporter family member 2B1 (682 aa).

The disordered stretch occupies residues 1–30 (MPDRSTKATMGAEDIHERKVSMEPRDSHQD). Residues 1-41 (MPDRSTKATMGAEDIHERKVSMEPRDSHQDAQPRGMFQNIK) are Cytoplasmic-facing. The span at 13-30 (EDIHERKVSMEPRDSHQD) shows a compositional bias: basic and acidic residues. The residue at position 21 (S21) is a Phosphoserine. The helical transmembrane segment at 42-61 (FFVLCHSILQLAQLMISGYL) threads the bilayer. Residues 62-80 (KSSISTVEKRFGLSSQTSG) are Extracellular-facing. The chain crosses the membrane as a helical span at residues 81 to 101 (LLAAFNEVGNISLILFVSYFG). The Cytoplasmic portion of the chain corresponds to 102–107 (SRVHRP). A helical transmembrane segment spans residues 108-132 (RMIGCGAILVAVAGLLMALPHFISE). At 133 to 176 (PYRYDHSSPDRSQDFEASLCLPTTMAPASALSNDSCSSRTETKH) the chain is on the extracellular side. An N-linked (GlcNAc...) asparagine glycan is attached at N165. Residues 177-206 (LTMVGIMFTAQTLLGIGGVPIQPFGISYID) traverse the membrane as a helical segment. At 207–225 (DFAHHSNSPLYLGILFAIT) the chain is on the cytoplasmic side. A helical membrane pass occupies residues 226 to 246 (MMGPGLAYGLGSLMLRLYVDI). Over 247–264 (DRMPEGGINLTTKDPRWV) the chain is Extracellular. N-linked (GlcNAc...) asparagine glycosylation occurs at N255. A helical transmembrane segment spans residues 265–289 (GAWWLGFLISAGLVVLAASPYFFFP). Residues 290 to 354 (REMPKEKYEL…IKVFPRVLLR (65 aa)) are Cytoplasmic-facing. S311 and S314 each carry phosphoserine. A helical transmembrane segment spans residues 355–376 (TLRHPIFLLVVLSQVCTSSMVA). Residues 377 to 396 (GTATFLPKFLERQFSITASF) lie on the Extracellular side of the membrane. A helical transmembrane segment spans residues 397–420 (ANLLLGCLTIPLAIVGIVVGGVLV). At 421–424 (KRLH) the chain is on the cytoplasmic side. The helical transmembrane segment at 425-448 (LSPMQCSALCLLGSLLCLLLSLPL) threads the bilayer. Residues 449 to 552 (FFIGCSTHHI…SACSRLVLPF (104 aa)) lie on the Extracellular side of the membrane. Positions 471-531 (PSLFPGCSEP…VFYTNCSCVA (61 aa)) constitute a Kazal-like domain. Intrachain disulfides connect C477–C508, C483–C504, and C492–C529. Residues N526 and N533 are each glycosylated (N-linked (GlcNAc...) asparagine). A helical membrane pass occupies residues 553–575 (ILLISLGAAVASITHTPSFMLIL). Residues 576 to 584 (RGVKKEDKT) are Cytoplasmic-facing. Residues 585–610 (LAVGMQFMLLRVLAWMPSPVIHGSAI) form a helical membrane-spanning segment. The Extracellular portion of the chain corresponds to 611–643 (DTTCVHWALTCGRRAVCRYYDHDLLRNRFIGLQ). Residues 644-661 (FFFKSGSLVCFALVLAIL) form a helical membrane-spanning segment. The Cytoplasmic segment spans residues 662 to 682 (RQQSREASTKATVKSSDLQEL).

Belongs to the organo anion transporter (TC 2.A.60) family. In terms of tissue distribution, expressed in liver, kidney, heart, lung and retina. Widely distributed in all brain regions.

It is found in the cell membrane. It localises to the basal cell membrane. The protein resides in the apical cell membrane. The enzyme catalyses coproporphyrin III(out) = coproporphyrin III(in). It carries out the reaction substance P(out) = substance P(in). It catalyses the reaction taurocholate(out) = taurocholate(in). The catalysed reaction is prostaglandin E1(out) = prostaglandin E1(in). The enzyme catalyses prostaglandin E2(out) = prostaglandin E2(in). It carries out the reaction prostaglandin D2(out) = prostaglandin D2(in). It catalyses the reaction leukotriene C4(out) = leukotriene C4(in). The catalysed reaction is L-thyroxine(out) = L-thyroxine(in). Mediates the Na(+)-independent transport of organic anions such as taurocholate, the prostaglandins D2 (PGD2), E1 (PGE1) and E2 (PGE2), leukotriene C4, thromboxane B2 and L-thyroxine. Also plays a role in the reuptake of neuropeptides such as substance P/TAC1 and vasoactive intestinal peptide/VIP released from retinal neurons. May act as a heme transporter that promotes cellular iron availability. Also transports heme by-product coproporphyrin III (CPIII), and may be involved in their hepatic disposition. May contribute to regulate the transport of organic compounds in testis across the blood-testis-barrier. Shows a pH-sensitive substrate specificity which may be ascribed to the protonation state of the binding site and leads to a stimulation of substrate transport in an acidic microenvironment. The exact transport mechanism has not been yet deciphered but most likely involves an anion exchange, coupling the cellular uptake of organic substrate with the efflux of an anionic compound. Hydrogencarbonate/HCO3(-) acts as a probable counteranion that exchanges for organic anions. Cytoplasmic glutamate may also act as counteranion in the placenta. In Rattus norvegicus (Rat), this protein is Solute carrier organic anion transporter family member 2B1.